The following is a 122-amino-acid chain: uncharacterized protein (122 aa).

3 helical membrane passes run 21 to 40, 57 to 77, and 94 to 114; these read VWSW…SIAI, YTHM…CICI, and LLFS…YCIY.

It localises to the membrane. This is an uncharacterized protein from Saccharomyces cerevisiae (strain ATCC 204508 / S288c) (Baker's yeast).